A 363-amino-acid polypeptide reads, in one-letter code: Small ribosomal subunit biogenesis GTPase RsgA (363 aa).

The CP-type G domain occupies His-112–Leu-268. GTP contacts are provided by residues Thr-157–Asp-160 and Gly-210–Thr-218. Zn(2+) is bound by residues Cys-291, Cys-296, His-298, and Cys-304. The interval Arg-340–Arg-363 is disordered.

It belongs to the TRAFAC class YlqF/YawG GTPase family. RsgA subfamily. Monomer. Associates with 30S ribosomal subunit, binds 16S rRNA. The cofactor is Zn(2+).

It localises to the cytoplasm. One of several proteins that assist in the late maturation steps of the functional core of the 30S ribosomal subunit. Helps release RbfA from mature subunits. May play a role in the assembly of ribosomal proteins into the subunit. Circularly permuted GTPase that catalyzes slow GTP hydrolysis, GTPase activity is stimulated by the 30S ribosomal subunit. This Xanthomonas oryzae pv. oryzae (strain MAFF 311018) protein is Small ribosomal subunit biogenesis GTPase RsgA.